Consider the following 769-residue polypeptide: Endothelin-converting enzyme 1 (769 aa).

The Cytoplasmic portion of the chain corresponds to 1-67 (MRTVWSPLAA…WAARTSVEKR (67 aa)). T24 carries the post-translational modification Phosphothreonine. Residues 68-88 (LVVLVTLLAAGLVACLAALGI) traverse the membrane as a helical; Signal-anchor for type II membrane protein segment. The Extracellular segment spans residues 89–769 (QYQTRTPPVC…MNPHHKCEVW (681 aa)). In terms of domain architecture, Peptidase M13 spans 97–769 (VCLTEACVSV…MNPHHKCEVW (673 aa)). Disulfide bonds link C98/C103, C121/C754, C129/C714, C184/C434, and C643/C766. N-linked (GlcNAc...) asparagine glycosylation is found at N165, N186, N209, N269, N315, N361, N382, and N538. Residue H606 coordinates Zn(2+). Residue E607 is part of the active site. Zn(2+) is bound at residue H610. N-linked (GlcNAc...) asparagine glycosylation is found at N631 and N650. E666 is a binding site for Zn(2+). Catalysis depends on D670, which acts as the Proton donor.

Belongs to the peptidase M13 family. Homodimer; disulfide-linked. Interacts with PPP1R16B. Interacts with TSPAN8; this interaction recruits the endothelin converting enzyme ECE1 to tetraspanin-enriched microdomains and positively modulates its enzymatic activity. The cofactor is Zn(2+).

Its subcellular location is the cell membrane. The enzyme catalyses Hydrolysis of the 21-Trp-|-Val-22 bond in big endothelin to form endothelin 1.. Inhibited by phosphoramidon. Converts big endothelin-1 to endothelin-1. The sequence is that of Endothelin-converting enzyme 1 (Ece1) from Mus musculus (Mouse).